The primary structure comprises 341 residues: Aspartate carbamoyltransferase catalytic subunit (341 aa).

Carbamoyl phosphate-binding residues include Arg-89 and Thr-90. Position 117 (Lys-117) interacts with L-aspartate. Positions 139, 169, and 172 each coordinate carbamoyl phosphate. L-aspartate is bound by residues Arg-202 and Arg-257. Carbamoyl phosphate-binding residues include Gly-298 and Pro-299.

This sequence belongs to the aspartate/ornithine carbamoyltransferase superfamily. ATCase family. In terms of assembly, heterododecamer (2C3:3R2) of six catalytic PyrB chains organized as two trimers (C3), and six regulatory PyrI chains organized as three dimers (R2).

The catalysed reaction is carbamoyl phosphate + L-aspartate = N-carbamoyl-L-aspartate + phosphate + H(+). The protein operates within pyrimidine metabolism; UMP biosynthesis via de novo pathway; (S)-dihydroorotate from bicarbonate: step 2/3. Catalyzes the condensation of carbamoyl phosphate and aspartate to form carbamoyl aspartate and inorganic phosphate, the committed step in the de novo pyrimidine nucleotide biosynthesis pathway. This chain is Aspartate carbamoyltransferase catalytic subunit, found in Paraburkholderia xenovorans (strain LB400).